Reading from the N-terminus, the 462-residue chain is MAATVNLELDPIFLKALGFLHSKSKDSAEKLKALLDESLARGIDSSYRPSQKDVEPPKISSTKNISIKQEPKISSSLPSGNNNGKVLTTEKVKKEAEKRPADKMKSDITEGVDIPKKPRLEKPETQSSPITVQSSKDLPMADLSSFEETSADDFAMEMGLACVVCRQMMVASGNQLVECQECHNLYHRDCHKPQVTDKEANDPRLVWYCARCTRQMKRMAQKTQKPPQKPAPAVVSVTPAVKDPLVKKPETKLKQETTFLAFKRTEVKTSTVISGNSSSASVSSSVTSGLTGWAAFAAKTSSAGPSTAKLSSTTQNNTGKPATSSANQKPVGLTGLATSSKGGIGSKIGSNNSTTPTVPLKPPPPLTLGKTGLSRSVSCDNVSKVGLPSPSSLVPGSSSQLSGNGNSGTSGPSGSTTSKTTSESSSSPSASLKGPTSQESQLNAMKRLQMVKKKAAQKKLKK.

Positions 42 to 132 are disordered; that stretch reads GIDSSYRPSQ…PETQSSPITV (91 aa). Polar residues predominate over residues 59–86; it reads ISSTKNISIKQEPKISSSLPSGNNNGKV. A Glycyl lysine isopeptide (Lys-Gly) (interchain with G-Cter in SUMO2) cross-link involves residue K68. Basic and acidic residues predominate over residues 88 to 124; that stretch reads TTEKVKKEAEKRPADKMKSDITEGVDIPKKPRLEKPE. S128 carries the post-translational modification Phosphoserine. Residues 159 to 215 form a PHD-type zinc finger; sequence GLACVVCRQMMVASGNQLVECQECHNLYHRDCHKPQVTDKEANDPRLVWYCARCTRQ. A Glycyl lysine isopeptide (Lys-Gly) (interchain with G-Cter in SUMO2) cross-link involves residue K254. Polar residues predominate over residues 301-328; it reads SSAGPSTAKLSSTTQNNTGKPATSSANQ. Residues 301-462 are disordered; it reads SSAGPSTAKL…KKAAQKKLKK (162 aa). Low complexity-rich tracts occupy residues 347–358 and 382–437; these read KIGSNNSTTPTV and VSKV…GPTS. The segment covering 449-462 has biased composition (basic residues); it reads QMVKKKAAQKKLKK.

It belongs to the Integrator subunit 12 family. As to quaternary structure, component of the Integrator complex, composed of core subunits INTS1, INTS2, INTS3, INTS4, INTS5, INTS6, INTS7, INTS8, INTS9/RC74, INTS10, INTS11/CPSF3L, INTS12, INTS13, INTS14 and INTS15. The core complex associates with protein phosphatase 2A subunits PPP2CA and PPP2R1A, to form the Integrator-PP2A (INTAC) complex. Post-translationally, dephosphorylated at Ser-128 by the PNUTS-PP1 complex, promoting RNA polymerase II transcription pause-release.

It localises to the nucleus. In terms of biological role, component of the integrator complex, a multiprotein complex that terminates RNA polymerase II (Pol II) transcription in the promoter-proximal region of genes. The integrator complex provides a quality checkpoint during transcription elongation by driving premature transcription termination of transcripts that are unfavorably configured for transcriptional elongation: the complex terminates transcription by (1) catalyzing dephosphorylation of the C-terminal domain (CTD) of Pol II subunit POLR2A/RPB1 and SUPT5H/SPT5, (2) degrading the exiting nascent RNA transcript via endonuclease activity and (3) promoting the release of Pol II from bound DNA. The integrator complex is also involved in terminating the synthesis of non-coding Pol II transcripts, such as enhancer RNAs (eRNAs), small nuclear RNAs (snRNAs), telomerase RNAs and long non-coding RNAs (lncRNAs). Mediates recruitment of cytoplasmic dynein to the nuclear envelope, probably as component of the integrator complex. The polypeptide is Integrator complex subunit 12 (Homo sapiens (Human)).